The following is a 343-amino-acid chain: Mitochondrial import inner membrane translocase subunit TIM50-A (343 aa).

At 1-57 (MHKIVWFGTLNKSIGYIGKKKTCLLSPCEKICLNSARKTVQRCDKNYSPPKLRRIKN) the chain is on the mitochondrial matrix side. Residues 58–77 (FYTYSVVLGSLFSIVMWAIY) traverse the membrane as a helical segment. Residues 78 to 343 (KLGKPEEDHR…GRSLRGSSIK (266 aa)) are Mitochondrial intermembrane-facing. The 144-residue stretch at 135 to 278 (YIQPPYSLVL…FDLTAFLQLI (144 aa)) folds into the FCP1 homology domain.

The protein belongs to the TIM50 family. Component of the TIM23 complex at least composed of Tim23, Tim17 (Tim17a1, Tim17a2 or Tim17b1) and a Tim50. As to expression, exclusively expressed in the testis.

Its subcellular location is the mitochondrion inner membrane. Essential component of the TIM23 complex, a complex that mediates the translocation of transit peptide-containing proteins across the mitochondrial inner membrane. The chain is Mitochondrial import inner membrane translocase subunit TIM50-A (ttm3) from Drosophila melanogaster (Fruit fly).